The chain runs to 221 residues: PKHD-type hydroxylase P9211_12561 (221 aa).

The Fe2OG dioxygenase domain maps to 80–174; the sequence is KVHGTMFTRS…RIVCVGWIQS (95 aa). Residues His-98, Asp-100, and His-155 each coordinate Fe cation. Arg-165 contacts 2-oxoglutarate.

Requires Fe(2+) as cofactor. L-ascorbate serves as cofactor.

The protein is PKHD-type hydroxylase P9211_12561 of Prochlorococcus marinus (strain MIT 9211).